Here is a 167-residue protein sequence, read N- to C-terminus: Putative N-acetylgalactosamine-6-phosphate deacetylase (167 aa).

Belongs to the metallo-dependent hydrolases superfamily. NagA family.

It carries out the reaction N-acetyl-D-galactosamine 6-phosphate + H2O = D-galactosamine 6-phosphate + acetate. This chain is Putative N-acetylgalactosamine-6-phosphate deacetylase (agaA), found in Escherichia coli (strain K12).